The primary structure comprises 93 residues: Large ribosomal subunit protein bL27 (93 aa).

The protein belongs to the bacterial ribosomal protein bL27 family.

This is Large ribosomal subunit protein bL27 from Trichormus variabilis (strain ATCC 29413 / PCC 7937) (Anabaena variabilis).